A 4377-amino-acid chain; its full sequence is E3 ubiquitin-protein ligase HUWE1 (4377 aa).

Phosphoserine is present on residues serine 648 and serine 649. 3 disordered regions span residues 706–758 (KADG…VVGT), 978–1001 (DEKAGTTQGGKRSDGEQDGTAGSM), and 1018–1038 (TLAPMETDEPSSSDSKGKSKI). Positions 725–735 (ASSEDEEEEEV) are enriched in acidic residues. Residues 737–756 (AMQSFNSAQQNETEPNQQVV) show a composition bias toward polar residues. Serine 740 is modified (phosphoserine). Phosphoserine is present on serine 1084. Residues 1291 to 1302 (LSKEKEGSRGEE) are compositionally biased toward basic and acidic residues. The segment at 1291 to 1320 (LSKEKEGSRGEEEAGQEEGGSRREPQVNQQ) is disordered. A UBA domain is found at 1316-1355 (QVNQQQLQQLMDMGFTREHAMEALLNTSTMEQATEYLLTH). A phosphoserine mark is found at serine 1368, serine 1370, serine 1382, and serine 1395. The region spanning 1370-1389 (SEEDQMMRAIAMSLGQDIPM) is the UIM domain. Positions 1396-1415 (PEEVACRKEEEERKAREKQE) are disordered. In terms of domain architecture, WWE spans 1603-1680 (RAQMTKYLQS…ETGNRRPVML (78 aa)). Residues 1690–1733 (KNSKSSNGQELEKTLEESKETDIKHKENKGNDIPLALESTNTEK) form a disordered region. The span at 1699 to 1719 (ELEKTLEESKETDIKHKENKG) shows a compositional bias: basic and acidic residues. At serine 1907 the chain carries Phosphoserine. Disordered stretches follow at residues 2019–2065 (APAE…SKPL), 2262–2343 (SLFG…QEMQ), and 2355–2479 (LLER…ASPL). The segment covering 2022–2033 (ETSTTGTSQGEA) has biased composition (polar residues). Residue threonine 2035 is modified to Phosphothreonine. A compositionally biased stretch (basic and acidic residues) spans 2037–2057 (EETREGKKDKEGDRTSEEGKQ). 2 stretches are compositionally biased toward low complexity: residues 2262 to 2271 (SLFGSKSASS) and 2278 to 2291 (DAQGASQDSSSHQQ). Serine 2266 carries the post-translational modification Phosphoserine. Lysine 2267 is modified (N6-acetyllysine). 2 stretches are compositionally biased toward acidic residues: residues 2295–2306 (EPGEAEVQEEDH) and 2314–2325 (ADGDIMDGEAET). Phosphoserine is present on residues serine 2362, serine 2365, and serine 2391. Positions 2388 to 2398 (SNLSQASTLQA) are enriched in polar residues. Residues 2408–2472 (DPEDEEEHTQ…SEMELDEDYP (65 aa)) show a composition bias toward acidic residues. Serine 2527, serine 2532, and serine 2535 each carry phosphoserine. Threonine 2554 carries the phosphothreonine modification. Phosphoserine occurs at positions 2584, 2595, and 2619. Positions 2704–2716 (IIDKGKEDKENRD) are enriched in basic and acidic residues. Disordered stretches follow at residues 2704–2970 (IIDK…GVDP), 2991–3012 (IRPPTRSAPSSNSSAPAVVGNP), and 3036–3059 (QQRAEQQRRELAQNASSDTPMDPV). Residues 2717–2736 (QSAQCTVTKTNDSTEQNVSD) are compositionally biased toward polar residues. Over residues 2738-2756 (TPMPDSYPTTPSSTDAPTS) the composition is skewed to low complexity. Position 2751 is a phosphothreonine (threonine 2751). Polar residues-rich tracts occupy residues 2818–2835 (AETTQMELSPAPTITSLS), 2847–2864 (AVSSQLEGSPMDTSSLAS), and 2877–2890 (AGSSEQPTAGSSTP). Phosphoserine occurs at positions 2826, 2833, 2835, 2861, 2887, and 2888. Threonine 2889 is modified (phosphothreonine). Low complexity-rich tracts occupy residues 2913–2932 (PPEDSSPPASSESSSTRDSA) and 2993–3007 (PPTRSAPSSNSSAPA). At serine 2918 the chain carries Phosphoserine. Serine 3116, serine 3117, serine 3122, serine 3127, and serine 3135 each carry phosphoserine. Omega-N-methylarginine is present on arginine 3149. Disordered stretches follow at residues 3243–3266 (PKLSTSEERGKKSSKSCASSSHEN), 3352–3383 (TQQRTKETNCESDRERGSKQACSPCSSQSSSS), 3405–3429 (GKNSVKSVPVSSGGEGETSPHSLEA), 3471–3514 (SEVQ…TTPV), and 3539–3566 (TPTTATTTVSTSTTKGSKSPAKVGEGGS). Basic and acidic residues predominate over residues 3355–3369 (RTKETNCESDRERGS). The span at 3370–3383 (KQACSPCSSQSSSS) shows a compositional bias: low complexity. 2 stretches are compositionally biased toward low complexity: residues 3475–3503 (TNSSNSGSSTAATSNTSTTTTTTTTATAP) and 3539–3552 (TPTTATTTVSTSTT). A phosphoserine mark is found at serine 3557, serine 3663, serine 3753, serine 3758, serine 3760, and serine 3761. Positions 3738-3759 (TRRANKKAKQTGRLGSSGLGSA) are disordered. The span at 3749–3759 (GRLGSSGLGSA) shows a compositional bias: low complexity. Disordered stretches follow at residues 3782–3850 (EGQR…LPLL) and 3897–3951 (RESK…SSSL). A compositionally biased stretch (polar residues) spans 3794 to 3803 (TSESSNQSET). 3 positions are modified to phosphoserine: serine 3810, serine 3818, and serine 3830. Positions 3817–3828 (PSPSAQDTQSIV) are enriched in polar residues. Threonine 3833 is modified (phosphothreonine). 2 stretches are compositionally biased toward basic and acidic residues: residues 3836–3845 (GEKEKEEKPP) and 3897–3918 (RESKPPVRDTRESQLAHIKDEP). Residues serine 3909 and serine 3922 each carry the phosphoserine modification. The segment covering 3919 to 3928 (PPLSPAPLTP) has biased composition (pro residues). Phosphothreonine is present on residues threonine 3927 and threonine 3930. A compositionally biased stretch (polar residues) spans 3941–3951 (EPSSMHISSSL). In terms of domain architecture, HECT spans 4041–4377 (SPEEMKNRLY…QECSEGFGLA (337 aa)). Tyrosine 4274 bears the Phosphotyrosine mark. Cysteine 4344 (glycyl thioester intermediate) is an active-site residue.

This sequence belongs to the UPL family. TOM1/PTR1 subfamily. As to quaternary structure, interacts with isoform p19ARF of CDKN2A which strongly inhibits HUWE1 ubiquitin ligase activity. Interacts with MYCN, POLB and CDC6. Interacts with PA2G4. Interacts with NR1D1. Interacts with AMBRA1. Interacts with HAPSTR1. Interacts with HAPSTR2. In hepatocytes, interacts with PAQR3; the interaction promotes PPARA poylubiquitination and STUB1-mediated degradation. Phosphorylated on tyrosine; phosphorylation is probably required for its ability to inhibit TP53 transactivation. In terms of tissue distribution, widely expressed.

It localises to the cytoplasm. The protein resides in the nucleus. The protein localises to the mitochondrion. The catalysed reaction is S-ubiquitinyl-[E2 ubiquitin-conjugating enzyme]-L-cysteine + [acceptor protein]-L-lysine = [E2 ubiquitin-conjugating enzyme]-L-cysteine + N(6)-ubiquitinyl-[acceptor protein]-L-lysine.. It participates in protein modification; protein ubiquitination. E3 ubiquitin-protein ligase which mediates ubiquitination and subsequent proteasomal degradation of target proteins. Regulates apoptosis by catalyzing the polyubiquitination and degradation of MCL1. Mediates monoubiquitination of DNA polymerase beta (POLB) at 'Lys-41', 'Lys-61' and 'Lys-81', thereby playing a role in base-excision repair. Also ubiquitinates the p53/TP53 tumor suppressor and core histones including H1, H2A, H2B, H3 and H4. Ubiquitinates MFN2 to negatively regulate mitochondrial fusion in response to decreased stearoylation of TFRC. Ubiquitination of MFN2 also takes place following induction of mitophagy; AMBRA1 acts as a cofactor for HUWE1-mediated ubiquitination. Regulates neural differentiation and proliferation by catalyzing the polyubiquitination and degradation of MYCN. May regulate abundance of CDC6 after DNA damage by polyubiquitinating and targeting CDC6 to degradation. Mediates polyubiquitination of PA2G4. Acts in concert with MYCBP2 to regulate the circadian clock gene expression by promoting the lithium-induced ubiquination and degradation of NR1D1. Binds to an upstream initiator-like sequence in the preprodynorphin gene. Mediates HAPSTR1 degradation, but is also a required cofactor in the pathway by which HAPSTR1 governs stress signaling. Acts as a regulator of the JNK and NF-kappa-B signaling pathways by mediating assembly of heterotypic 'Lys-63'-/'Lys-48'-linked branched ubiquitin chains that are then recognized by TAB2: HUWE1 mediates branching of 'Lys-48'-linked chains of substrates initially modified with 'Lys-63'-linked conjugates by TRAF6. 'Lys-63'-/'Lys-48'-linked branched ubiquitin chains protect 'Lys-63'-linkages from CYLD deubiquitination. Ubiquitinates PPARA in hepatocytes. This chain is E3 ubiquitin-protein ligase HUWE1 (Huwe1), found in Mus musculus (Mouse).